The sequence spans 454 residues: DNA-binding protein (454 aa).

Residues 1–41 (MSHKKVVAISESSSDEEVPVAPPTAPPKKRQRKAVEEPRGH) are disordered. A Phosphotyrosine; by host modification is found at Tyr-129. Residues Cys-213 and His-215 each coordinate Zn(2+). The interval 226-260 (VEMDVNSENAQRALKENPEKTKIVSNRWGRNVVQF) is flexible loop. Residues Cys-268, Cys-284, Cys-325, Cys-327, Cys-378, and Cys-394 each coordinate Zn(2+). A C-terminal arm, DBP binding region spans residues 440–454 (TILPQGQHDDDLVLF).

This sequence belongs to the adenoviridae E2A DNA-binding protein family. In terms of assembly, homomultimerizes on viral ssDNA bound to pTP. Forms a initiation complex with viral polymerase, pTP and hosts NFIA and POU2F1/OCT1. Interacts with host SRCAP.

It is found in the host nucleus. Its function is as follows. Plays a role in the elongation phase of viral strand displacement replication by unwinding the template in an ATP-independent fashion, employing its capacity to form multimers. Also enhances the rate of initiation. Released from template upon second strand synthesis. Assembles in complex with viral pTP, viral pol, host NFIA and host POU2F1/OCT1 on viral origin of replication. Covers the whole ssDNA genome during synthesis. The complementary strand synthesis induces its relese from DNA template. May inhibit cellular transcription mediated by the interaction between host SRCAP and CBP. This Canine adenovirus serotype 1 (strain CLL) (CAdV-1) protein is DNA-binding protein.